We begin with the raw amino-acid sequence, 270 residues long: Indole-3-glycerol phosphate synthase (270 aa).

It belongs to the TrpC family.

The enzyme catalyses 1-(2-carboxyphenylamino)-1-deoxy-D-ribulose 5-phosphate + H(+) = (1S,2R)-1-C-(indol-3-yl)glycerol 3-phosphate + CO2 + H2O. The protein operates within amino-acid biosynthesis; L-tryptophan biosynthesis; L-tryptophan from chorismate: step 4/5. This chain is Indole-3-glycerol phosphate synthase, found in Beutenbergia cavernae (strain ATCC BAA-8 / DSM 12333 / CCUG 43141 / JCM 11478 / NBRC 16432 / NCIMB 13614 / HKI 0122).